The primary structure comprises 366 residues: MRPAQASIDLEALRHNYRLAKRLGGSKALAVVKADAYGHGAVPCAQALEPEADGFAVACIEEALELRQAGIRAPILLLEGFFEHDELRLIAEHDLWTVAATPQQVRALAAFQSPRPLRVWLKMDSGMHRLGLSPEDFRAAWLRLRGLPQIASLVLMTHLARADELDCSRTDEQAVAFALTAGGMRAETSLRNSPGLLGWPALRNDWSRPGLMLYGANPFPQDTENTAQLRPVMTLRSRIILVRDLPVGEPVGYGARFVAERPTRVGVVAMGYADGYPQFAPNGTPVLVDGQVCPLIGRVSMDMLTVDLTDHPQADIGATVQLWGQAPRVGPLATQCNVSAYQLLCGLKRLPRTYVGSAAVGEVAAR.

The active-site Proton acceptor; specific for D-alanine is the Lys33. The residue at position 33 (Lys33) is an N6-(pyridoxal phosphate)lysine. Arg129 contacts substrate. Catalysis depends on Tyr253, which acts as the Proton acceptor; specific for L-alanine. Position 301 (Met301) interacts with substrate.

It belongs to the alanine racemase family. Pyridoxal 5'-phosphate is required as a cofactor.

It catalyses the reaction L-alanine = D-alanine. It functions in the pathway amino-acid biosynthesis; D-alanine biosynthesis; D-alanine from L-alanine: step 1/1. Catalyzes the interconversion of L-alanine and D-alanine. May also act on other amino acids. The protein is Alanine racemase (alr) of Xanthomonas oryzae pv. oryzae (strain KACC10331 / KXO85).